Consider the following 100-residue polypeptide: uncharacterized protein (100 aa).

Over residues 68 to 91 (EQYASGAGEKRKEQSSGNSRRKDP) the composition is skewed to basic and acidic residues. A disordered region spans residues 68 to 100 (EQYASGAGEKRKEQSSGNSRRKDPSLYNWSDVK).

Belongs to the chlamydial CPn_0121/CT_031/TC_0300 family.

This is an uncharacterized protein from Chlamydia muridarum (strain MoPn / Nigg).